A 206-amino-acid chain; its full sequence is Protein GrpE (206 aa).

A compositionally biased stretch (basic and acidic residues) spans 1–14 (MDKKNEQQEVREEN). Residues 1-56 (MDKKNEQQEVREENDTSINQESETQVELEEEVVNEECETSSEKTDEKEVDDENVTD) form a disordered region. Residues 24–39 (TQVELEEEVVNEECET) are compositionally biased toward acidic residues.

This sequence belongs to the GrpE family. In terms of assembly, homodimer.

Its subcellular location is the cytoplasm. Functionally, participates actively in the response to hyperosmotic and heat shock by preventing the aggregation of stress-denatured proteins, in association with DnaK and GrpE. It is the nucleotide exchange factor for DnaK and may function as a thermosensor. Unfolded proteins bind initially to DnaJ; upon interaction with the DnaJ-bound protein, DnaK hydrolyzes its bound ATP, resulting in the formation of a stable complex. GrpE releases ADP from DnaK; ATP binding to DnaK triggers the release of the substrate protein, thus completing the reaction cycle. Several rounds of ATP-dependent interactions between DnaJ, DnaK and GrpE are required for fully efficient folding. This Clostridioides difficile (strain 630) (Peptoclostridium difficile) protein is Protein GrpE.